We begin with the raw amino-acid sequence, 144 residues long: MSMHYEDYMRQVVEPMRRELTERGFKELLTPEEVEQYMESAEGTTLVVINSVCGCAAGLARPAAVTSLAHDKHPDHLVTVFAGQEKEATAKMREYLAPNPPSSPSMALFKGKELVHFIPREEIEGAEPEALIRRLAMAYNEHCE.

It belongs to the bacilliredoxin family.

The polypeptide is Bacilliredoxin BH1716 (Halalkalibacterium halodurans (strain ATCC BAA-125 / DSM 18197 / FERM 7344 / JCM 9153 / C-125) (Bacillus halodurans)).